The sequence spans 190 residues: Glutathione peroxidase 2 (190 aa).

The active site involves selenocysteine 40. Selenocysteine 40 is a non-standard amino acid (selenocysteine).

Belongs to the glutathione peroxidase family. As to quaternary structure, homotetramer.

The protein resides in the cytoplasm. Its subcellular location is the cytosol. It carries out the reaction 2 glutathione + H2O2 = glutathione disulfide + 2 H2O. The catalysed reaction is a hydroperoxy polyunsaturated fatty acid + 2 glutathione = a hydroxy polyunsaturated fatty acid + glutathione disulfide + H2O. It catalyses the reaction tert-butyl hydroperoxide + 2 glutathione = tert-butanol + glutathione disulfide + H2O. The enzyme catalyses cumene hydroperoxide + 2 glutathione = 2-phenylpropan-2-ol + glutathione disulfide + H2O. It carries out the reaction (13S)-hydroperoxy-(9Z,11E)-octadecadienoate + 2 glutathione = (13S)-hydroxy-(9Z,11E)-octadecadienoate + glutathione disulfide + H2O. The catalysed reaction is (5S)-hydroperoxy-(6E,8Z,11Z,14Z)-eicosatetraenoate + 2 glutathione = (5S)-hydroxy-(6E,8Z,11Z,14Z)-eicosatetraenoate + glutathione disulfide + H2O. It catalyses the reaction (12R)-hydroperoxy-(5Z,8Z,10E,14Z)-eicosatetraenoate + 2 glutathione = (12R)-hydroxy-(5Z,8Z,10E,14Z)-eicosatetraenoate + glutathione disulfide + H2O. The enzyme catalyses (15S)-hydroperoxy-(5Z,8Z,11Z,13E)-eicosatetraenoate + 2 glutathione = (15S)-hydroxy-(5Z,8Z,11Z,13E)-eicosatetraenoate + glutathione disulfide + H2O. Its function is as follows. Catalyzes the reduction of hydroperoxides in a glutathione-dependent manner thus regulating cellular redox homeostasis. Can reduce small soluble hydroperoxides such as H2O2, cumene hydroperoxide and tert-butyl hydroperoxide, as well as several fatty acid-derived hydroperoxides. Cannot reduce phosphatidycholine hydroperoxide. The protein is Glutathione peroxidase 2 (GPX2) of Callithrix jacchus (White-tufted-ear marmoset).